The chain runs to 351 residues: MTIREKFEQRELDFLSPFACPSAKSKGRKRPEAPCPIRTAFQRDRDRIVYSNAFRRLKHKTQVFLSPLGDHYRTRLTHTLEVAEIARTIARAMRLNEDLTEAVALGHDLGHTPFGHGGETVLKELFHKDFTHSRQSLRVVDCLERRGEGLNLTYEVMDGIAKHSKGFGTIMPNDAGEVASTMEGRVVRVADIIAYLSHDLDDAIRSGVVTRDQVPSHCVEVLGERHRDLVTTMIRDVVYSSGEEDGQMTIKMSDAMHDVMLELRTFLYNNVYRAPVVHNEFVKAKKILSELFDYYMNNVDAFQKAAIEQELFASPEHAAPTKQNVCDLIASMTDRFALTRYQKIFFPTPMV.

The HD domain maps to 75–196 (RLTHTLEVAE…VRVADIIAYL (122 aa)).

It belongs to the dGTPase family. Type 2 subfamily.

This is Deoxyguanosinetriphosphate triphosphohydrolase-like protein from Desulfatibacillum aliphaticivorans.